Here is a 297-residue protein sequence, read N- to C-terminus: Manganese efflux system protein MneP (297 aa).

6 helical membrane passes run 12–32 (VALIALIANLILMAGKVFFGL), 43–63 (GIHSAADVVASIAVLAVIGIS), 85–105 (IVGIILVIVSVYILIEAILSF), 111–131 (VPQYSALFAALISYVAKEILY), 155–175 (GDIVASLAAFIGVLLAIIGNS), and 177–197 (GWSYLLYADAIASAIVAYLIF).

The protein belongs to the cation diffusion facilitator (CDF) transporter (TC 2.A.4) family.

Its subcellular location is the cell membrane. Functionally, primary efflux pump for manganese. May prevent manganese intoxication. The protein is Manganese efflux system protein MneP of Bacillus subtilis (strain 168).